We begin with the raw amino-acid sequence, 938 residues long: Isoleucine--tRNA ligase (938 aa).

Positions 58-68 (PYANGNIHMGH) match the 'HIGH' region motif. Residue Glu566 participates in L-isoleucyl-5'-AMP binding. The short motif at 607–611 (KMSKS) is the 'KMSKS' region element. Lys610 contacts ATP. Positions 906, 909, 926, and 929 each coordinate Zn(2+).

This sequence belongs to the class-I aminoacyl-tRNA synthetase family. IleS type 1 subfamily. Monomer. The cofactor is Zn(2+).

It is found in the cytoplasm. It catalyses the reaction tRNA(Ile) + L-isoleucine + ATP = L-isoleucyl-tRNA(Ile) + AMP + diphosphate. Catalyzes the attachment of isoleucine to tRNA(Ile). As IleRS can inadvertently accommodate and process structurally similar amino acids such as valine, to avoid such errors it has two additional distinct tRNA(Ile)-dependent editing activities. One activity is designated as 'pretransfer' editing and involves the hydrolysis of activated Val-AMP. The other activity is designated 'posttransfer' editing and involves deacylation of mischarged Val-tRNA(Ile). This chain is Isoleucine--tRNA ligase, found in Nitratidesulfovibrio vulgaris (strain ATCC 29579 / DSM 644 / CCUG 34227 / NCIMB 8303 / VKM B-1760 / Hildenborough) (Desulfovibrio vulgaris).